The chain runs to 375 residues: N5-carboxyaminoimidazole ribonucleotide synthase (375 aa).

ATP contacts are provided by residues R108, K148, 153 to 159, 183 to 186, E191, H214, and 268 to 269; these read GYDGKGQ, EQYL, and NE. The 187-residue stretch at 112–298 folds into the ATP-grasp domain; sequence KQTLQDSGSN…QFDTHIKAIT (187 aa).

Belongs to the PurK/PurT family. In terms of assembly, homodimer.

It catalyses the reaction 5-amino-1-(5-phospho-beta-D-ribosyl)imidazole + hydrogencarbonate + ATP = 5-carboxyamino-1-(5-phospho-D-ribosyl)imidazole + ADP + phosphate + 2 H(+). The protein operates within purine metabolism; IMP biosynthesis via de novo pathway; 5-amino-1-(5-phospho-D-ribosyl)imidazole-4-carboxylate from 5-amino-1-(5-phospho-D-ribosyl)imidazole (N5-CAIR route): step 1/2. Its function is as follows. Catalyzes the ATP-dependent conversion of 5-aminoimidazole ribonucleotide (AIR) and HCO(3)(-) to N5-carboxyaminoimidazole ribonucleotide (N5-CAIR). This Staphylococcus saprophyticus subsp. saprophyticus (strain ATCC 15305 / DSM 20229 / NCIMB 8711 / NCTC 7292 / S-41) protein is N5-carboxyaminoimidazole ribonucleotide synthase.